The following is a 172-amino-acid chain: Large ribosomal subunit protein uL10 (172 aa).

Belongs to the universal ribosomal protein uL10 family. As to quaternary structure, part of the ribosomal stalk of the 50S ribosomal subunit. The N-terminus interacts with L11 and the large rRNA to form the base of the stalk. The C-terminus forms an elongated spine to which L12 dimers bind in a sequential fashion forming a multimeric L10(L12)X complex.

Functionally, forms part of the ribosomal stalk, playing a central role in the interaction of the ribosome with GTP-bound translation factors. This chain is Large ribosomal subunit protein uL10, found in Syntrophotalea carbinolica (strain DSM 2380 / NBRC 103641 / GraBd1) (Pelobacter carbinolicus).